A 494-amino-acid chain; its full sequence is Serine/arginine-rich splicing factor 4 (494 aa).

The RRM 1 domain occupies 2-72; that stretch reads PRVYIGRLSY…ERVIVEHARG (71 aa). Disordered regions lie at residues 72-95 and 169-494; these read GPRR…GRDK and KIRL…HSRS. Ser-78 and Ser-84 each carry phosphoserine. An RRM 2 domain is found at 104–177; that stretch reads YRLIVENLSS…RKIRLVEDKP (74 aa). Composition is skewed to basic residues over residues 179-206 and 214-246; these read SRRR…KSRS and SHSK…KKEK. Basic and acidic residues predominate over residues 247–256; the sequence is SRSPSKEKSR. Positions 257-267 are enriched in basic residues; it reads SRSHSAGKSRS. Positions 268 to 278 are enriched in basic and acidic residues; it reads KSKDQAEEKIQ. The span at 286–302 shows a compositional bias: basic residues; the sequence is PKSRSPSRHKSKSKSRS. Residues Ser-288, Ser-290, and Ser-292 each carry the phosphoserine modification. Positions 303 to 327 are enriched in basic and acidic residues; it reads RSQERRVEEEKRGSVSRGRSQEKSL. 2 stretches are compositionally biased toward basic residues: residues 328-359 and 367-382; these read RQSR…GRKR and RSRS…KRGS. Residues 411 to 431 show a composition bias toward basic and acidic residues; the sequence is VSKEREHAKSESSQREGRGES. Residues Ser-431, Ser-446, Ser-456, Ser-458, and Ser-460 each carry the phosphoserine modification. Positions 449 to 460 are enriched in low complexity; that stretch reads KSKPNLPSESRS. A compositionally biased stretch (basic residues) spans 461–494; that stretch reads RSKSASKTRSRSKSRSRSASRSPSRSRSRSHSRS.

Belongs to the splicing factor SR family. As to quaternary structure, found in a pre-mRNA splicing complex with SRSF4/SFRS4, SRSF5/SFRS5, SNRNP70, SNRPA1, SRRM1 and SRRM2. Interacts with PNN. Post-translationally, extensively phosphorylated on serine residues in the RS domain.

It is found in the nucleus speckle. In terms of biological role, plays a role in alternative splice site selection during pre-mRNA splicing. Represses the splicing of MAPT/Tau exon 10. The sequence is that of Serine/arginine-rich splicing factor 4 (SRSF4) from Homo sapiens (Human).